The sequence spans 224 residues: Glycerol-3-phosphate acyltransferase (224 aa).

A run of 6 helical transmembrane segments spans residues 3-23, 54-74, 90-112, 127-147, 152-172, and 183-203; these read IFLSIAINILIFWIGYLIGSL, VFGYKVAIVILFIDIFKVVFA, LYFYIPLIAGLAAQIGQAYPIYF, LISINVLLWPIAGVFFFLLLF, VSLSSLLTTLIMIGFISIPWM, and GFGQFWVNIIIYLFAAALIFW.

Belongs to the PlsY family. As to quaternary structure, probably interacts with PlsX.

The protein resides in the cell membrane. It catalyses the reaction an acyl phosphate + sn-glycerol 3-phosphate = a 1-acyl-sn-glycero-3-phosphate + phosphate. The protein operates within lipid metabolism; phospholipid metabolism. Catalyzes the transfer of an acyl group from acyl-phosphate (acyl-PO(4)) to glycerol-3-phosphate (G3P) to form lysophosphatidic acid (LPA). This enzyme utilizes acyl-phosphate as fatty acyl donor, but not acyl-CoA or acyl-ACP. In Mycoplasmopsis synoviae (strain 53) (Mycoplasma synoviae), this protein is Glycerol-3-phosphate acyltransferase.